The primary structure comprises 358 residues: UDP-N-acetylglucosamine--N-acetylmuramyl-(pentapeptide) pyrophosphoryl-undecaprenol N-acetylglucosamine transferase (358 aa).

UDP-N-acetyl-alpha-D-glucosamine is bound by residues 11–13 (TGG), asparagine 120, arginine 161, serine 188, and glutamine 282.

This sequence belongs to the glycosyltransferase 28 family. MurG subfamily.

The protein resides in the cell inner membrane. The catalysed reaction is di-trans,octa-cis-undecaprenyl diphospho-N-acetyl-alpha-D-muramoyl-L-alanyl-D-glutamyl-meso-2,6-diaminopimeloyl-D-alanyl-D-alanine + UDP-N-acetyl-alpha-D-glucosamine = di-trans,octa-cis-undecaprenyl diphospho-[N-acetyl-alpha-D-glucosaminyl-(1-&gt;4)]-N-acetyl-alpha-D-muramoyl-L-alanyl-D-glutamyl-meso-2,6-diaminopimeloyl-D-alanyl-D-alanine + UDP + H(+). The protein operates within cell wall biogenesis; peptidoglycan biosynthesis. Functionally, cell wall formation. Catalyzes the transfer of a GlcNAc subunit on undecaprenyl-pyrophosphoryl-MurNAc-pentapeptide (lipid intermediate I) to form undecaprenyl-pyrophosphoryl-MurNAc-(pentapeptide)GlcNAc (lipid intermediate II). This is UDP-N-acetylglucosamine--N-acetylmuramyl-(pentapeptide) pyrophosphoryl-undecaprenol N-acetylglucosamine transferase from Parasynechococcus marenigrum (strain WH8102).